The following is a 312-amino-acid chain: tRNA (adenine(58)-N(1))-methyltransferase catalytic subunit trmt61a (312 aa).

S-adenosyl-L-methionine contacts are provided by residues leucine 85, 112–114 (SGS), glutamate 133, arginine 138, 161–162 (DA), and aspartate 183.

This sequence belongs to the class I-like SAM-binding methyltransferase superfamily. TRM61 family. In terms of assembly, heterotetramer; composed of two copies of trmt6 and two copies of trmt61a.

It localises to the nucleus. It carries out the reaction adenosine(58) in tRNA + S-adenosyl-L-methionine = N(1)-methyladenosine(58) in tRNA + S-adenosyl-L-homocysteine + H(+). With respect to regulation, inhibited by calcium and magnesium ions and spermidine. Enhanced by KCl, NaCl and NH(4)Cl in concentrations from 0.1-0.25 M. Concentrations of more than 0.3 M are inhibitory. Functionally, catalytic subunit of tRNA (adenine-N(1)-)-methyltransferase, which catalyzes the formation of N(1)-methyladenine at position 58 (m1A58) in initiator methionyl-tRNA. The protein is tRNA (adenine(58)-N(1))-methyltransferase catalytic subunit trmt61a (trmt61a) of Dictyostelium discoideum (Social amoeba).